Consider the following 219-residue polypeptide: MARIEIDKMSKLLQVYFIMGSNNCTRDPLAVLKEALDGGVTIFQFREKGEGSLIGEDRVRFAKELQTLCNEYSVPFIVNDDVELAIELDADGVHVGQDDEGITSVREKMGDKIIGVSAHTIEEARFAIENGADYLGVGPIFPTSTKKDTKAVQGTKGLAYFREQGITVPIVGIGGITIENTAAVIEAGADGVSVISAISLAESAYESTRKLAEEVKRSL.

4-amino-2-methyl-5-(diphosphooxymethyl)pyrimidine contacts are provided by residues 44–48 (QFREK) and Asn79. Residues Asp80 and Asp99 each coordinate Mg(2+). Ser117 lines the 4-amino-2-methyl-5-(diphosphooxymethyl)pyrimidine pocket. 143–145 (TST) provides a ligand contact to 2-[(2R,5Z)-2-carboxy-4-methylthiazol-5(2H)-ylidene]ethyl phosphate. Lys146 lines the 4-amino-2-methyl-5-(diphosphooxymethyl)pyrimidine pocket. 2-[(2R,5Z)-2-carboxy-4-methylthiazol-5(2H)-ylidene]ethyl phosphate is bound by residues Gly175 and 195–196 (IS).

Belongs to the thiamine-phosphate synthase family. The cofactor is Mg(2+).

It catalyses the reaction 2-[(2R,5Z)-2-carboxy-4-methylthiazol-5(2H)-ylidene]ethyl phosphate + 4-amino-2-methyl-5-(diphosphooxymethyl)pyrimidine + 2 H(+) = thiamine phosphate + CO2 + diphosphate. The enzyme catalyses 2-(2-carboxy-4-methylthiazol-5-yl)ethyl phosphate + 4-amino-2-methyl-5-(diphosphooxymethyl)pyrimidine + 2 H(+) = thiamine phosphate + CO2 + diphosphate. It carries out the reaction 4-methyl-5-(2-phosphooxyethyl)-thiazole + 4-amino-2-methyl-5-(diphosphooxymethyl)pyrimidine + H(+) = thiamine phosphate + diphosphate. It functions in the pathway cofactor biosynthesis; thiamine diphosphate biosynthesis; thiamine phosphate from 4-amino-2-methyl-5-diphosphomethylpyrimidine and 4-methyl-5-(2-phosphoethyl)-thiazole: step 1/1. Its function is as follows. Condenses 4-methyl-5-(beta-hydroxyethyl)thiazole monophosphate (THZ-P) and 2-methyl-4-amino-5-hydroxymethyl pyrimidine pyrophosphate (HMP-PP) to form thiamine monophosphate (TMP). In Bacillus cereus (strain ATCC 14579 / DSM 31 / CCUG 7414 / JCM 2152 / NBRC 15305 / NCIMB 9373 / NCTC 2599 / NRRL B-3711), this protein is Thiamine-phosphate synthase.